Consider the following 267-residue polypeptide: Undecaprenyl-diphosphatase (267 aa).

The next 7 membrane-spanning stretches (helical) occupy residues 39–59 (PGLA…IWYF), 87–107 (VLYL…LNDL), 112–132 (FRSP…LWAV), 145–165 (VTLR…VPGV), 183–203 (PSVA…AVIV), 216–236 (LPLL…ISVL), and 244–264 (SFGV…ATLA).

This sequence belongs to the UppP family.

It localises to the cell inner membrane. The enzyme catalyses di-trans,octa-cis-undecaprenyl diphosphate + H2O = di-trans,octa-cis-undecaprenyl phosphate + phosphate + H(+). In terms of biological role, catalyzes the dephosphorylation of undecaprenyl diphosphate (UPP). Confers resistance to bacitracin. The polypeptide is Undecaprenyl-diphosphatase (Gemmatimonas aurantiaca (strain DSM 14586 / JCM 11422 / NBRC 100505 / T-27)).